Consider the following 225-residue polypeptide: Protein-L-isoaspartate O-methyltransferase (225 aa).

The active site involves serine 75.

Belongs to the methyltransferase superfamily. L-isoaspartyl/D-aspartyl protein methyltransferase family.

It is found in the cytoplasm. It catalyses the reaction [protein]-L-isoaspartate + S-adenosyl-L-methionine = [protein]-L-isoaspartate alpha-methyl ester + S-adenosyl-L-homocysteine. Catalyzes the methyl esterification of L-isoaspartyl residues in peptides and proteins that result from spontaneous decomposition of normal L-aspartyl and L-asparaginyl residues. It plays a role in the repair and/or degradation of damaged proteins. The polypeptide is Protein-L-isoaspartate O-methyltransferase (Xanthomonas campestris pv. campestris (strain 8004)).